The chain runs to 203 residues: Small ribosomal subunit protein uS4 (203 aa).

The 64-residue stretch at 93–156 (RRLDNVVYRL…MKVPAILEAV (64 aa)) folds into the S4 RNA-binding domain.

Belongs to the universal ribosomal protein uS4 family. In terms of assembly, part of the 30S ribosomal subunit. Contacts protein S5. The interaction surface between S4 and S5 is involved in control of translational fidelity.

Its function is as follows. One of the primary rRNA binding proteins, it binds directly to 16S rRNA where it nucleates assembly of the body of the 30S subunit. Functionally, with S5 and S12 plays an important role in translational accuracy. The sequence is that of Small ribosomal subunit protein uS4 from Streptococcus equi subsp. equi (strain 4047).